A 106-amino-acid chain; its full sequence is Gas vesicle protein J (106 aa).

Belongs to the gas vesicle GvpA family.

Its subcellular location is the gas vesicle. A minor component of the gas vesicle, might be involved in nucleating gas vesicle formation. Gas vesicles are hollow, gas filled proteinaceous nanostructures found in some microorganisms. It is not clear what function gas vesicles perform in soil bacteria. This chain is Gas vesicle protein J, found in Streptomyces sp. (strain CB03234).